Here is a 540-residue protein sequence, read N- to C-terminus: MVFTKEEVDYSLYLVTDSTMLPPGTTLCSQVEAGLKNGVTLVQIREKDIETKNFVAEALEVQKICKKYNVPLIINDRIDVAMAIDADGVHVGQDDMPIPMVRKLLGPSKILGWSVGKPSEVETLAKWGPDMVDYIGVGTLFPTSTKKNPKKSPMGPQGAIAILDALEEFKATWCRTVGIGGLHPDNIQRVLCQCVASNGKRSLDGISLVSDIMAAPDACAATKRLRGLLDATRYQFVECELNNTFPTTTSIQNVISQVSNNRPLVQHITNKVHQNFGANVTLALGSSPIMSEIESEVSELARIPNASLLLNTGSVAPIEMLKAAINAYNEVNRPITFDPVGYSATETRLCLNNTLLTYGQFACIKGNCSEILSLAKLNNHKMKGVDSSSGKTNIDTLVRATQIVAFQYRTVAVCTGEFDCVADGTFGGEYKLSSGTEGITAEDLPCVIIEDGPIPIMGDITASGCSLGSTIASFIGGLDSTGKLFDAVVGAVLLYKSAGKLASTRCQGSGSFHVELIDALYQLFHENKPEKWSASLKKFK.

Positions 1–238 are thiamine-phosphate synthase; the sequence is MVFTKEEVDY…LDATRYQFVE (238 aa). 4-amino-2-methyl-5-(diphosphooxymethyl)pyrimidine-binding positions include 43–47 and asparagine 75; that span reads QIREK. Residues aspartate 76 and aspartate 95 each coordinate Mg(2+). Serine 114 is a binding site for 4-amino-2-methyl-5-(diphosphooxymethyl)pyrimidine. Position 143-145 (143-145) interacts with 2-[(2R,5Z)-2-carboxy-4-methylthiazol-5(2H)-ylidene]ethyl phosphate; it reads TST. Lysine 146 serves as a coordination point for 4-amino-2-methyl-5-(diphosphooxymethyl)pyrimidine. 2-[(2R,5Z)-2-carboxy-4-methylthiazol-5(2H)-ylidene]ethyl phosphate-binding positions include glycine 181 and 209–210; that span reads VS. Positions 239–540 are hydroxyethylthiazole kinase; it reads CELNNTFPTT…KWSASLKKFK (302 aa). Methionine 290 contributes to the 5-(2-hydroxyethyl)-4-methylthiazole binding site. ATP contacts are provided by lysine 365 and threonine 415. Alanine 462 is a 5-(2-hydroxyethyl)-4-methylthiazole binding site. Cysteine 465 functions as the Proton acceptor; for hydroxyethylthiazole kinase activity in the catalytic mechanism.

It in the N-terminal section; belongs to the thiamine-phosphate synthase family. The protein in the C-terminal section; belongs to the Thz kinase family. In terms of assembly, homooctamer. Requires Mg(2+) as cofactor.

The catalysed reaction is 2-[(2R,5Z)-2-carboxy-4-methylthiazol-5(2H)-ylidene]ethyl phosphate + 4-amino-2-methyl-5-(diphosphooxymethyl)pyrimidine + 2 H(+) = thiamine phosphate + CO2 + diphosphate. The enzyme catalyses 2-(2-carboxy-4-methylthiazol-5-yl)ethyl phosphate + 4-amino-2-methyl-5-(diphosphooxymethyl)pyrimidine + 2 H(+) = thiamine phosphate + CO2 + diphosphate. It carries out the reaction 4-methyl-5-(2-phosphooxyethyl)-thiazole + 4-amino-2-methyl-5-(diphosphooxymethyl)pyrimidine + H(+) = thiamine phosphate + diphosphate. It catalyses the reaction 5-(2-hydroxyethyl)-4-methylthiazole + ATP = 4-methyl-5-(2-phosphooxyethyl)-thiazole + ADP + H(+). It participates in cofactor biosynthesis; thiamine diphosphate biosynthesis; 4-methyl-5-(2-phosphoethyl)-thiazole from 5-(2-hydroxyethyl)-4-methylthiazole: step 1/1. The protein operates within cofactor biosynthesis; thiamine diphosphate biosynthesis; thiamine phosphate from 4-amino-2-methyl-5-diphosphomethylpyrimidine and 4-methyl-5-(2-phosphoethyl)-thiazole: step 1/1. In terms of biological role, essential for thiamine biosynthesis. The kinase activity is involved in the salvage synthesis of TH-P from the thiazole. Its function is as follows. Condenses 4-methyl-5-(beta-hydroxyethyl)thiazole monophosphate (THZ-P) and 2-methyl-4-amino-5-hydroxymethyl pyrimidine pyrophosphate (HMP-PP) to form thiamine monophosphate (TMP). The sequence is that of Thiamine biosynthetic bifunctional enzyme (THI6) from Saccharomyces cerevisiae (strain ATCC 204508 / S288c) (Baker's yeast).